Consider the following 360-residue polypeptide: MGRCTALHEEHLALGARMTEFSGWELPLHYGSQIAEHHAVRRAAGMFDVSHLGVVDVEGLQAAPFLRRVLANDVARLAEPGRMLYGCMLNQDGGIVDDLVVGFIDDRRFRLILNAGTREKDLSWLHRQAAPFSVTVTPRDDLAMIALQGPDSPRIADAVVAAGSSGLKPFTATQRGDRFIARTGYTGEDGFEIILPHAEAGSLWRQLFQAGARPCGLGARDTLRLEAGMRLYGQDMDETVTPLACGLGWTVAWEPEERDFIGRAALERERIGGSPSKFVGLILEEPGILRSGQKVAVANVGEGVVTSGGFSPTLRRSIGLARVPAATGRECRVEIRGSLKRATVVKPRFVRRSTSLIDIC.

Belongs to the GcvT family. In terms of assembly, the glycine cleavage system is composed of four proteins: P, T, L and H.

It catalyses the reaction N(6)-[(R)-S(8)-aminomethyldihydrolipoyl]-L-lysyl-[protein] + (6S)-5,6,7,8-tetrahydrofolate = N(6)-[(R)-dihydrolipoyl]-L-lysyl-[protein] + (6R)-5,10-methylene-5,6,7,8-tetrahydrofolate + NH4(+). In terms of biological role, the glycine cleavage system catalyzes the degradation of glycine. The polypeptide is Aminomethyltransferase (Methylococcus capsulatus (strain ATCC 33009 / NCIMB 11132 / Bath)).